The sequence spans 44 residues: Photosystem I reaction center subunit IX (44 aa).

Residues 9-29 form a helical membrane-spanning segment; sequence YMRSAPVVAAAWITMTAGIII.

It belongs to the PsaJ family.

Its subcellular location is the cellular thylakoid membrane. Its function is as follows. May help in the organization of the PsaE and PsaF subunits. In Prochlorococcus marinus (strain MIT 9312), this protein is Photosystem I reaction center subunit IX.